A 62-amino-acid chain; its full sequence is Venom protein 51.1 (62 aa).

Positions 1-25 are cleaved as a signal peptide; it reads MKFFGILLIVTMVVLVMIATTYVES. Disulfide bonds link cysteine 32/cysteine 53, cysteine 39/cysteine 58, and cysteine 43/cysteine 60.

In terms of tissue distribution, expressed by the venom gland.

The protein localises to the secreted. Functionally, neurotoxin. Decreases the action potential of myelinated nerves in mice and frogs. This Lychas mucronatus (Chinese swimming scorpion) protein is Venom protein 51.1.